The chain runs to 447 residues: N-succinylarginine dihydrolase (447 aa).

Substrate is bound by residues 19–28 (AGLSFGNEAS), N110, and 137–138 (HR). The active site involves E174. Substrate is bound at residue R213. The active site involves H249. 2 residues coordinate substrate: D251 and N364. Catalysis depends on C370, which acts as the Nucleophile.

Belongs to the succinylarginine dihydrolase family. As to quaternary structure, homodimer.

The catalysed reaction is N(2)-succinyl-L-arginine + 2 H2O + 2 H(+) = N(2)-succinyl-L-ornithine + 2 NH4(+) + CO2. It participates in amino-acid degradation; L-arginine degradation via AST pathway; L-glutamate and succinate from L-arginine: step 2/5. Its function is as follows. Catalyzes the hydrolysis of N(2)-succinylarginine into N(2)-succinylornithine, ammonia and CO(2). In Yersinia enterocolitica serotype O:8 / biotype 1B (strain NCTC 13174 / 8081), this protein is N-succinylarginine dihydrolase.